Consider the following 210-residue polypeptide: Thymidylate kinase (210 aa).

11–18 (GGEGAGKT) contacts ATP.

The protein belongs to the thymidylate kinase family.

It catalyses the reaction dTMP + ATP = dTDP + ADP. Phosphorylation of dTMP to form dTDP in both de novo and salvage pathways of dTTP synthesis. In Halalkalibacterium halodurans (strain ATCC BAA-125 / DSM 18197 / FERM 7344 / JCM 9153 / C-125) (Bacillus halodurans), this protein is Thymidylate kinase (tmk).